Consider the following 237-residue polypeptide: Ubiquinone biosynthesis O-methyltransferase (237 aa).

Residues Arg-38, Gly-58, Asp-79, and Met-124 each contribute to the S-adenosyl-L-methionine site.

This sequence belongs to the methyltransferase superfamily. UbiG/COQ3 family.

The enzyme catalyses a 3-demethylubiquinol + S-adenosyl-L-methionine = a ubiquinol + S-adenosyl-L-homocysteine + H(+). It catalyses the reaction a 3-(all-trans-polyprenyl)benzene-1,2-diol + S-adenosyl-L-methionine = a 2-methoxy-6-(all-trans-polyprenyl)phenol + S-adenosyl-L-homocysteine + H(+). It functions in the pathway cofactor biosynthesis; ubiquinone biosynthesis. Its function is as follows. O-methyltransferase that catalyzes the 2 O-methylation steps in the ubiquinone biosynthetic pathway. The chain is Ubiquinone biosynthesis O-methyltransferase from Acinetobacter baumannii (strain ACICU).